A 718-amino-acid chain; its full sequence is MSSSLLTGGHVVSLTPHEESRMALHPTPSHDLPALCPYYTTESWGTQPLMDPTLCKGSSNRLQQAQQAEARAQCLLQCPGEQASGASQDLDSCIDFSLEALNKMILELDPTFQLLPSGIAGPQAEPTNSVASRTKKEEPDALDIKYIEVTSTRSRCLDSPQRCSSPCVTPPFGSPRSGGLFLSRDIPRETRSSSNESLIFSGNQGRGSSPHTPSSLSNSIPCRESRASGSPLATPPGWEKGLRAPQWGSRVSTLSASPVSDISYVFGSNQSLPHSSLSSYPPSSRSLGSPASSSSSLHSLDRGSQCVRSSDAQVPSNPIVGMGQPQAVPSTPVAKEQASSCPPSVTNSMADIPIVLINGNPEPQSPPAQQTPRYQDSVQSRATSPSHLCQATKSHSKTLPDVPLTSPSHLCQATKSHSKTLPDVPLTASPESPAKDMQPTMKFVMDTSKYWFKPSITREQAINLLRTEKPGTFVIRDSSSYRGSFGLALKVQETPASAPNRPGEDSTDFIRHFLVESSAKGVHLKGADEEPYFGSLSAFVCQHSIMALALPCKLTIPQKELGGAEPASDSPTHGQTSCLKISAGCHTLYLTSVSVETLSGALAVQKAISVMLERDVLPTPTVVHFKVTEQGITLTDVQRKVFFRRHYPLIALRFCGMDPEQRKWQKYCKPSRIFGFVAKSQTEPQENACHLFAEYDAAQPASQVISLVTALLKDTERV.

A signal peptide spans 1–14; the sequence is MSSSLLTGGHVVSL. 2 disordered regions span residues 188–244 and 272–437; these read RETR…GLRA and LPHS…AKDM. Polar residues predominate over residues 192–207; it reads SSSNESLIFSGNQGRG. The span at 208–219 shows a compositional bias: low complexity; that stretch reads SSPHTPSSLSNS. Residue Ser230 is modified to Phosphoserine. Over residues 272-304 the composition is skewed to low complexity; sequence LPHSSLSSYPPSSRSLGSPASSSSSLHSLDRGS. Polar residues-rich tracts occupy residues 306–316, 337–349, 367–393, and 405–415; these read CVRSSDAQVPS, QASS…TNSM, PAQQ…QATK, and TSPSHLCQATK. The region spanning 451–558 is the SH2 domain; that stretch reads WFKPSITREQ…ALPCKLTIPQ (108 aa). Residues 585 to 711 enclose the PTB domain; it reads CHTLYLTSVS…SQVISLVTAL (127 aa).

The protein belongs to the PTEN phosphatase protein family. In terms of assembly, interacts (via SH2 domain) with Rho GTPase-activating protein DLC1 (via C-terminus); the interaction is independent of DLC1 tyrosine phosphorylation. Interacts with integrin ITGB1; the interaction displaces tensin TNS3 from the ITGB1 cytoplasmic tail and promotes ITGB1 stability. Interacts (via SH2 domain) with E3 ubiquitin-protein ligase CBL (phosphorylated on 'Tyr-781'); the interaction is enhanced in the presence of EGF and reduces interaction of CBL with EGFR. Interacts (via SH2 domain) with receptor tyrosine kinase MET (when phosphorylated); the interaction increases MET protein stability.

The protein localises to the cell junction. The protein resides in the focal adhesion. Its subcellular location is the cytoplasm. It localises to the cytoskeleton. Functionally, promotes EGF-induced cell migration by displacing tensin TNS3 from the cytoplasmic tail of integrin ITGB1 which results in dissociation of TNS3 from focal adhesions, disassembly of actin stress fibers and initiation of cell migration. Suppresses ligand-induced degradation of EGFR by reducing EGFR ubiquitination in the presence of EGF. Increases MET protein stability by inhibiting MET endocytosis and subsequent lysosomal degradation which leads to increased cell survival, proliferation and migration. The sequence is that of Tensin-4 (Tns4) from Rattus norvegicus (Rat).